Here is a 1068-residue protein sequence, read N- to C-terminus: Carbamoyl phosphate synthase large chain (1068 aa).

The interval 1-401 (MPLNKDIKKV…AFLKGIRSLE (401 aa)) is carboxyphosphate synthetic domain. 12 residues coordinate ATP: arginine 129, arginine 169, glycine 175, glycine 176, lysine 208, valine 210, glutamate 215, glycine 241, isoleucine 242, histidine 243, glutamine 284, and glutamate 298. The ATP-grasp 1 domain maps to 133 to 327 (RNVMSRINEP…IAKVAAKIAL (195 aa)). Glutamine 284, glutamate 298, and asparagine 300 together coordinate Mg(2+). Mn(2+) contacts are provided by glutamine 284, glutamate 298, and asparagine 300. Positions 402-549 (IGKYSLEHKK…YSTYDVYDEV (148 aa)) are oligomerization domain. The tract at residues 550–932 (EVSKNKKVIV…ALYKGFIGAN (383 aa)) is carbamoyl phosphate synthetic domain. An ATP-grasp 2 domain is found at 674–864 (DELLEKLQIS…IVDIATRVML (191 aa)). Residues arginine 710, lysine 749, leucine 751, glutamate 755, glycine 780, valine 781, histidine 782, serine 783, glutamine 823, and glutamate 835 each coordinate ATP. Positions 823, 835, and 837 each coordinate Mg(2+). Residues glutamine 823, glutamate 835, and asparagine 837 each contribute to the Mn(2+) site. Residues 933–1068 (MSIKKEKGTI…ETLHIFDLSN (136 aa)) enclose the MGS-like domain. An allosteric domain region spans residues 933-1068 (MSIKKEKGTI…ETLHIFDLSN (136 aa)).

Belongs to the CarB family. In terms of assembly, composed of two chains; the small (or glutamine) chain promotes the hydrolysis of glutamine to ammonia, which is used by the large (or ammonia) chain to synthesize carbamoyl phosphate. Tetramer of heterodimers (alpha,beta)4. It depends on Mg(2+) as a cofactor. Mn(2+) is required as a cofactor.

It catalyses the reaction hydrogencarbonate + L-glutamine + 2 ATP + H2O = carbamoyl phosphate + L-glutamate + 2 ADP + phosphate + 2 H(+). The enzyme catalyses hydrogencarbonate + NH4(+) + 2 ATP = carbamoyl phosphate + 2 ADP + phosphate + 2 H(+). The protein operates within amino-acid biosynthesis; L-arginine biosynthesis; carbamoyl phosphate from bicarbonate: step 1/1. It functions in the pathway pyrimidine metabolism; UMP biosynthesis via de novo pathway; (S)-dihydroorotate from bicarbonate: step 1/3. In terms of biological role, large subunit of the glutamine-dependent carbamoyl phosphate synthetase (CPSase). CPSase catalyzes the formation of carbamoyl phosphate from the ammonia moiety of glutamine, carbonate, and phosphate donated by ATP, constituting the first step of 2 biosynthetic pathways, one leading to arginine and/or urea and the other to pyrimidine nucleotides. The large subunit (synthetase) binds the substrates ammonia (free or transferred from glutamine from the small subunit), hydrogencarbonate and ATP and carries out an ATP-coupled ligase reaction, activating hydrogencarbonate by forming carboxy phosphate which reacts with ammonia to form carbamoyl phosphate. This is Carbamoyl phosphate synthase large chain from Clostridium botulinum (strain Loch Maree / Type A3).